We begin with the raw amino-acid sequence, 318 residues long: MSQSVINEAAISAPAETAAALSFKQGEKIVYENNKLHKRLCRQVGQAIGDFNMIEDGDKIMVCLSGGKDSYALLDILMTLRERAPIKFDIVAVNLDQKQPNFPEHILPAYLKQLDIPFHIENQDTYSIVKRLIPEGKTTCSLCSRLRRGILYRVADELGATKIALGHHRDDIMETFFLNMFFGAKIKGMPPKLQSDDGKHIVIRPLAYVKEADTERYAQIKNFPIIPCDLCGSQENLQRKQIKNMLREWEKKHPGRVDNIFSSLSTVVPSHLMDSNLFGFADLQATGVAMPNGDIAFDEEPCSTGSTISSVIPLRTED.

A PP-loop motif motif is present at residues 65 to 70 (SGGKDS). [4Fe-4S] cluster-binding residues include Cys-140, Cys-143, and Cys-231.

It belongs to the TtcA family. As to quaternary structure, homodimer. It depends on Mg(2+) as a cofactor. [4Fe-4S] cluster is required as a cofactor.

Its subcellular location is the cytoplasm. The enzyme catalyses cytidine(32) in tRNA + S-sulfanyl-L-cysteinyl-[cysteine desulfurase] + AH2 + ATP = 2-thiocytidine(32) in tRNA + L-cysteinyl-[cysteine desulfurase] + A + AMP + diphosphate + H(+). It participates in tRNA modification. Its function is as follows. Catalyzes the ATP-dependent 2-thiolation of cytidine in position 32 of tRNA, to form 2-thiocytidine (s(2)C32). The sulfur atoms are provided by the cysteine/cysteine desulfurase (IscS) system. The polypeptide is tRNA-cytidine(32) 2-sulfurtransferase (Herminiimonas arsenicoxydans).